The sequence spans 1496 residues: Chromosome partition protein MukB (1496 aa).

An ATP-binding site is contributed by 63 to 70 (GGNGAGKS). 5 coiled-coil regions span residues 328–493 (KLEL…QRLS), 536–632 (KMQA…APAW), 808–832 (RAAR…HAER), 861–1171 (NPEE…SAEE), and 1235–1291 (IDAI…LQNI). Positions 694–811 (PDGSDDVRLN…EVPLFGRAAR (118 aa)) are flexible hinge. The segment covering 1082–1091 (RARSRRDELQ) has biased composition (basic and acidic residues). Residues 1082–1101 (RARSRRDELQQRLSQQRSRK) are disordered.

It belongs to the SMC family. MukB subfamily. Homodimerization via its hinge domain. Binds to DNA via its C-terminal region. Interacts, and probably forms a ternary complex, with MukE and MukF via its C-terminal region. The complex formation is stimulated by calcium or magnesium. Interacts with tubulin-related protein FtsZ.

It localises to the cytoplasm. It is found in the nucleoid. In terms of biological role, plays a central role in chromosome condensation, segregation and cell cycle progression. Functions as a homodimer, which is essential for chromosome partition. Involved in negative DNA supercoiling in vivo, and by this means organize and compact chromosomes. May achieve or facilitate chromosome segregation by condensation DNA from both sides of a centrally located replisome during cell division. This chain is Chromosome partition protein MukB, found in Actinobacillus pleuropneumoniae serotype 5b (strain L20).